A 333-amino-acid polypeptide reads, in one-letter code: Ig gamma-2B chain C region (333 aa).

Ig-like domains lie at 6 to 96 (PSVY…KKVE), 124 to 223 (PSVF…KTIS), and 232 to 328 (PQVY…KSIS). Intrachain disulfides connect Cys-27–Cys-80, Cys-147–Cys-207, and Cys-253–Cys-311.

In Rattus norvegicus (Rat), this protein is Ig gamma-2B chain C region (Igh-1a).